Here is a 432-residue protein sequence, read N- to C-terminus: Adenylosuccinate synthetase (432 aa).

Residues 13-19 and 41-43 contribute to the GTP site; these read GDEGKGK and GHT. The active-site Proton acceptor is Asp-14. Positions 14 and 41 each coordinate Mg(2+). Residues 14-17, 39-42, Thr-130, Arg-144, Gln-225, Thr-240, and Arg-304 contribute to the IMP site; these read DEGK and NAGH. The active-site Proton donor is the His-42. Position 300–306 (300–306) interacts with substrate; it reads ATTGRSR. GTP contacts are provided by residues Arg-306, 332–334, and 415–417; these read KLD and STG.

Belongs to the adenylosuccinate synthetase family. Homodimer. Mg(2+) is required as a cofactor.

It localises to the cytoplasm. The enzyme catalyses IMP + L-aspartate + GTP = N(6)-(1,2-dicarboxyethyl)-AMP + GDP + phosphate + 2 H(+). The protein operates within purine metabolism; AMP biosynthesis via de novo pathway; AMP from IMP: step 1/2. Plays an important role in the de novo pathway of purine nucleotide biosynthesis. Catalyzes the first committed step in the biosynthesis of AMP from IMP. The protein is Adenylosuccinate synthetase of Marinomonas sp. (strain MWYL1).